We begin with the raw amino-acid sequence, 464 residues long: MSRLFQKEDDIVALATPFFSSALCVIRSSGVSAIEKFSTMFSDPSKLLEASGHTIHYGYILDNETKEKLDEVVVCLYRAPKSFTGQDSIEVMAHGSLIGIRRIIDFFLKVGFRMAEPGEFTLRSFLAGKLDLTKAEAINELISAKTRQVHALAVNKLSGSLFDKIDLIKKDILNFLSAISVYLDYETDDNEVVIPVDIILKSKSELERLIDSYDTARKLENGVTLVLAGSVNVGKSSLFNLLLKEDRAIVSSYAGTTRDYIQASFEFDGILFNVFDTAGLRETSDFVEQLGIVRSNSLIKEASLIFYVVDLSGKLTDDDLKFIDAYKEDSRVLFVLNKVDLEQNNQTVEFFNSNDIVSLNTVKISTKTLFGINSLYDRIRSFIAVDYMKTSDYDIVISSTRQAALLKRAYALIIELLSKIEQNISYDMLAFDVYEVVNVLGEITGEVTSDDVLNNMFKNFCLGK.

(6S)-5-formyl-5,6,7,8-tetrahydrofolate-binding residues include Arg-27, Glu-90, and Lys-129. The 163-residue stretch at 222–384 (GVTLVLAGSV…LYDRIRSFIA (163 aa)) folds into the TrmE-type G domain. GTP is bound by residues 232-237 (NVGKSS), 251-257 (SSYAGTT), and 276-279 (DTAG). Ser-236 is a Mg(2+) binding site. Ser-251 contacts K(+). Residue Thr-257 participates in Mg(2+) binding. Residue Lys-464 coordinates (6S)-5-formyl-5,6,7,8-tetrahydrofolate.

Belongs to the TRAFAC class TrmE-Era-EngA-EngB-Septin-like GTPase superfamily. TrmE GTPase family. Homodimer. Heterotetramer of two MnmE and two MnmG subunits. K(+) is required as a cofactor.

Its subcellular location is the cytoplasm. In terms of biological role, exhibits a very high intrinsic GTPase hydrolysis rate. Involved in the addition of a carboxymethylaminomethyl (cmnm) group at the wobble position (U34) of certain tRNAs, forming tRNA-cmnm(5)s(2)U34. This is tRNA modification GTPase MnmE from Borrelia recurrentis (strain A1).